We begin with the raw amino-acid sequence, 273 residues long: MNQLRKIIESAFEKKEYISNNNIDSTVNNAVREIMDRLDNGTLRISEKINGTWITHQWLKKAIMLAFHTMDNQLITWGGGVFFDKFPMKFSGWDHTRFENKKLRIIPPATVRYGAYIADNTVIMPSYINLGAYIDVGTMIDTWATVGSCAQIGKYVHLSGGVGIGGVLEPIQTNPTIIEDNCFIGSRSEIVEGVIVEKGAVISMGVFIGQSTKIYDRASGNIYYGRVPAGSVVIPGSLPSKDGRVNTYCAVIVKTVDSKTKNKVKINNLLRDI.

Residues Arg-104 and Asp-141 each contribute to the substrate site.

It belongs to the transferase hexapeptide repeat family. Homotrimer.

The protein resides in the cytoplasm. It catalyses the reaction (S)-2,3,4,5-tetrahydrodipicolinate + succinyl-CoA + H2O = (S)-2-succinylamino-6-oxoheptanedioate + CoA. It functions in the pathway amino-acid biosynthesis; L-lysine biosynthesis via DAP pathway; LL-2,6-diaminopimelate from (S)-tetrahydrodipicolinate (succinylase route): step 1/3. The sequence is that of 2,3,4,5-tetrahydropyridine-2,6-dicarboxylate N-succinyltransferase from Blochmanniella pennsylvanica (strain BPEN).